Here is a 336-residue protein sequence, read N- to C-terminus: tRNA(Ile)-lysidine synthase (336 aa).

21–26 contacts ATP; it reads SGGLDS.

Belongs to the tRNA(Ile)-lysidine synthase family.

It is found in the cytoplasm. It catalyses the reaction cytidine(34) in tRNA(Ile2) + L-lysine + ATP = lysidine(34) in tRNA(Ile2) + AMP + diphosphate + H(+). Ligates lysine onto the cytidine present at position 34 of the AUA codon-specific tRNA(Ile) that contains the anticodon CAU, in an ATP-dependent manner. Cytidine is converted to lysidine, thus changing the amino acid specificity of the tRNA from methionine to isoleucine. This chain is tRNA(Ile)-lysidine synthase, found in Helicobacter pylori (strain ATCC 700392 / 26695) (Campylobacter pylori).